A 267-amino-acid chain; its full sequence is Heme-containing CO-sensing transcriptional regulator RcoM 1 (267 aa).

The PAS domain maps to 15 to 86; that stretch reads RAETFQHKLE…KSRDKLRFLL (72 aa). Residues His74 and Met104 each contribute to the heme site. Positions 161–266 constitute an HTH LytTR-type domain; it reads IPVYRKNRVI…TAQLKELLGV (106 aa).

The cofactor is heme.

It is found in the cytoplasm. One-component, b-type heme-containing aerobic sensor and transcriptional regulator that responds to CO by activating the expression of the oxidation operon cox. This is Heme-containing CO-sensing transcriptional regulator RcoM 1 (rcoM1) from Paraburkholderia xenovorans (strain LB400).